Reading from the N-terminus, the 224-residue chain is Uracil-DNA glycosylase (224 aa).

Asp-62 serves as the catalytic Proton acceptor.

This sequence belongs to the uracil-DNA glycosylase (UDG) superfamily. UNG family.

The protein resides in the cytoplasm. It catalyses the reaction Hydrolyzes single-stranded DNA or mismatched double-stranded DNA and polynucleotides, releasing free uracil.. Excises uracil residues from the DNA which can arise as a result of misincorporation of dUMP residues by DNA polymerase or due to deamination of cytosine. This chain is Uracil-DNA glycosylase, found in Aliivibrio salmonicida (strain LFI1238) (Vibrio salmonicida (strain LFI1238)).